The primary structure comprises 948 residues: Putative helicase 009L (948 aa).

One can recognise a Helicase ATP-binding domain in the interval 64-243 (LSEDTPYREL…ADVLNLILPQ (180 aa)). ATP is bound at residue 77–84 (HAPGTGKT). A DEAH box motif is present at residues 187–190 (DEVH). Positions 371 to 554 (VKYDYLVRVA…AVERILMTSA (184 aa)) constitute a Helicase C-terminal domain.

This chain is Putative helicase 009L, found in Frog virus 3 (isolate Goorha) (FV-3).